A 331-amino-acid polypeptide reads, in one-letter code: UPF0194 membrane protein YbhG (331 aa).

The N-terminal stretch at 1-15 (MKKPVVIGLAVVVLA) is a signal peptide. Residues 107–208 (EEIAQAAAAV…LNLQDSTLIA (102 aa)) are a coiled coil.

The protein belongs to the UPF0194 family.

It localises to the periplasm. The protein is UPF0194 membrane protein YbhG of Escherichia coli O157:H7 (strain EC4115 / EHEC).